The sequence spans 183 residues: MSAFKKSLLVAGVAMILSNNVFADEGHGIVKFKGEVISAPCSIKPGDEDLTVNLGEVADTVLKSDQKSLAEPFTIHLQDCMLSQGGTTYSKAKVTFTTANTMTGQSDLLKNTKETEIGGATGVGVRILDSQSGEVTLGTPVVITFNNTNSYQELNFKARMESPSKDATPGNVYAQADYKIAYE.

A signal peptide spans 1-23; that stretch reads MSAFKKSLLVAGVAMILSNNVFA. Cys41 and Cys80 are disulfide-bonded.

The protein belongs to the fimbrial protein family.

It localises to the fimbrium. This is an uncharacterized protein from Escherichia coli (strain K12).